The following is a 490-amino-acid chain: Protein nucleotidyltransferase YdiU (490 aa).

Residues Gly-89, Gly-91, Arg-92, Lys-112, Asp-124, Gly-125, Arg-175, and Arg-182 each coordinate ATP. The active-site Proton acceptor is the Asp-251. The Mg(2+) site is built by Asn-252 and Asp-261. Residue Asp-261 coordinates ATP.

The protein belongs to the SELO family. Mg(2+) serves as cofactor. The cofactor is Mn(2+).

It catalyses the reaction L-seryl-[protein] + ATP = 3-O-(5'-adenylyl)-L-seryl-[protein] + diphosphate. The enzyme catalyses L-threonyl-[protein] + ATP = 3-O-(5'-adenylyl)-L-threonyl-[protein] + diphosphate. It carries out the reaction L-tyrosyl-[protein] + ATP = O-(5'-adenylyl)-L-tyrosyl-[protein] + diphosphate. The catalysed reaction is L-histidyl-[protein] + UTP = N(tele)-(5'-uridylyl)-L-histidyl-[protein] + diphosphate. It catalyses the reaction L-seryl-[protein] + UTP = O-(5'-uridylyl)-L-seryl-[protein] + diphosphate. The enzyme catalyses L-tyrosyl-[protein] + UTP = O-(5'-uridylyl)-L-tyrosyl-[protein] + diphosphate. Nucleotidyltransferase involved in the post-translational modification of proteins. It can catalyze the addition of adenosine monophosphate (AMP) or uridine monophosphate (UMP) to a protein, resulting in modifications known as AMPylation and UMPylation. This is Protein nucleotidyltransferase YdiU from Vibrio vulnificus (strain CMCP6).